Here is a 302-residue protein sequence, read N- to C-terminus: Phosphoribosylaminoimidazole-succinocarboxamide synthase (302 aa).

It belongs to the SAICAR synthetase family.

The catalysed reaction is 5-amino-1-(5-phospho-D-ribosyl)imidazole-4-carboxylate + L-aspartate + ATP = (2S)-2-[5-amino-1-(5-phospho-beta-D-ribosyl)imidazole-4-carboxamido]succinate + ADP + phosphate + 2 H(+). Its pathway is purine metabolism; IMP biosynthesis via de novo pathway; 5-amino-1-(5-phospho-D-ribosyl)imidazole-4-carboxamide from 5-amino-1-(5-phospho-D-ribosyl)imidazole-4-carboxylate: step 1/2. The protein is Phosphoribosylaminoimidazole-succinocarboxamide synthase of Cupriavidus pinatubonensis (strain JMP 134 / LMG 1197) (Cupriavidus necator (strain JMP 134)).